Consider the following 97-residue polypeptide: RxLR effector protein PexRD21 (97 aa).

The first 21 residues, 1–21 (MRLSYILVVVIAVTLQACVCA), serve as a signal peptide directing secretion. The RxLR-dEER signature appears at 48-66 (RLLRGVKKRTAEREVQEER).

Belongs to the RxLR effector family.

Its subcellular location is the secreted. The protein localises to the host cell membrane. In terms of biological role, effector that is involved in host plant infection. Contributes to virulence during the early infection stage, by inhibiting plant defense responses induced by both PAMP-triggered immunity (PTI) and effector-triggered immunity (ETI). The polypeptide is RxLR effector protein PexRD21 (Phytophthora infestans (strain T30-4) (Potato late blight agent)).